A 121-amino-acid chain; its full sequence is HTH-type transcriptional regulator Rv1152 (121 aa).

Residues Lys15–Phe83 form the HTH gntR-type domain. A DNA-binding region (H-T-H motif) is located at residues Val43–Arg62.

It localises to the cytoplasm. Its subcellular location is the secreted. The protein resides in the cell wall. In terms of biological role, transcriptional regulator that modulates resistance to vancomycin and aminoglycosides. Negatively regulates the expression of several genes responsive to vancomycin, resulting in decreased susceptibility of bacteria to vancomycin. Negatively regulates the expression of genes encoding the ribosome binding protein Hsp, the small subunit of sulfate adenylyltransferase CysD, the L-lysine-epsilon aminotransferase LAT and the protease HtpX. Also modulates purine metabolism and aminoglycoside antibiotic resistance. Negatively regulates the expression of purine metabolism-related genes and the accumulation of purine metabolites, which affects aminoglycoside antibiotic resistance. In Mycobacterium tuberculosis (strain ATCC 25618 / H37Rv), this protein is HTH-type transcriptional regulator Rv1152.